A 240-amino-acid chain; its full sequence is Phosphatidylserine decarboxylase proenzyme (240 aa).

S209 (schiff-base intermediate with substrate; via pyruvic acid) is an active-site residue. S209 is subject to Pyruvic acid (Ser); by autocatalysis.

It belongs to the phosphatidylserine decarboxylase family. PSD-A subfamily. In terms of assembly, heterodimer of a large membrane-associated beta subunit and a small pyruvoyl-containing alpha subunit. Pyruvate is required as a cofactor. Is synthesized initially as an inactive proenzyme. Formation of the active enzyme involves a self-maturation process in which the active site pyruvoyl group is generated from an internal serine residue via an autocatalytic post-translational modification. Two non-identical subunits are generated from the proenzyme in this reaction, and the pyruvate is formed at the N-terminus of the alpha chain, which is derived from the carboxyl end of the proenzyme. The post-translation cleavage follows an unusual pathway, termed non-hydrolytic serinolysis, in which the side chain hydroxyl group of the serine supplies its oxygen atom to form the C-terminus of the beta chain, while the remainder of the serine residue undergoes an oxidative deamination to produce ammonia and the pyruvoyl prosthetic group on the alpha chain.

The protein resides in the cell membrane. The catalysed reaction is a 1,2-diacyl-sn-glycero-3-phospho-L-serine + H(+) = a 1,2-diacyl-sn-glycero-3-phosphoethanolamine + CO2. It functions in the pathway phospholipid metabolism; phosphatidylethanolamine biosynthesis; phosphatidylethanolamine from CDP-diacylglycerol: step 2/2. Functionally, catalyzes the formation of phosphatidylethanolamine (PtdEtn) from phosphatidylserine (PtdSer). The protein is Phosphatidylserine decarboxylase proenzyme of Mycobacterium marinum (strain ATCC BAA-535 / M).